Reading from the N-terminus, the 994-residue chain is ASI1-immunoprecipitated protein 2 (994 aa).

Disordered regions lie at residues alanine 39–asparagine 182 and lysine 187–glutamate 206. Residues lysine 45 to serine 54 are compositionally biased toward basic and acidic residues. The span at serine 60–asparagine 102 shows a compositional bias: polar residues. Basic and acidic residues-rich tracts occupy residues leucine 119–alanine 140 and lysine 148–asparagine 163. Residues valine 212–alanine 263 form a PHD-type zinc finger. Residues cysteine 215, cysteine 218, cysteine 230, cysteine 233, histidine 239, cysteine 242, cysteine 257, and cysteine 260 each contribute to the Zn(2+) site. 2 disordered regions span residues alanine 342–glycine 567 and cysteine 839–threonine 875. Residues serine 371 to arginine 384 show a composition bias toward low complexity. Polar residues-rich tracts occupy residues valine 417 to aspartate 435 and threonine 449 to isoleucine 464. Composition is skewed to basic and acidic residues over residues serine 469–serine 478, proline 536–valine 552, and aspartate 858–threonine 875.

In terms of assembly, component of the ASI1-AIPP1-EDM2 (AAE) RNA regulatory complex composed of at least AIPP1/EDM3, ASI1 and EDM2 and may contain CPL2, AIPP2 and AIPP3/BDT1. Part of the BAH-PHD bivalent histone reader complex that contains AIPP2, PAIPP2 and AIPP3/BDT1; the BAH-PHD module associates with CPL2 to form the BAH-PHD-CPL2 complex (BPC) for transcriptional repression. Binds directly to ASI1, AIPP3/BDT1 and CPL2 but not to PAIPP2. In terms of tissue distribution, expressed ubiquitously.

In terms of biological role, together with AIPP3/BDT1 and PAIPP2, cooperates to form a BAH-PHD bivalent histone reader complex able to read histone H3 lysine 27 trimethylation (H3K27me3) and low-methylated H3K4 histone marks in order to regulate transcription, especially to prevent early flowering; promotes AIPP3/BDT1 binding to H3K27me3. CPL2 is subsequently recruited to form a BAH-PHD-CPL2 complex (BPC) in order to silence several H3K27me3 and low-methylated H3K4 enriched loci, including AGO5, via the phosphorylation state-dependent inhibition of Pol II release from the transcriptional start site (e.g. Ser5P-Pol II dephosphorylation). The BPC complex represses flowering by inhibiting the expression of several genes, including AGL6, FT, FUL and SOC1. Prevents the accumulation of intronic heterochromatin-containing genes (e.g. IBM1, At3g05410 and RPP7). The sequence is that of ASI1-immunoprecipitated protein 2 from Arabidopsis thaliana (Mouse-ear cress).